Consider the following 342-residue polypeptide: Ribosomal RNA small subunit methyltransferase H (342 aa).

S-adenosyl-L-methionine is bound by residues glycine 36–histidine 38, aspartate 56, phenylalanine 82, aspartate 100, and glutamine 107. The disordered stretch occupies residues glutamate 309–proline 342. The span at phenylalanine 333 to proline 342 shows a compositional bias: polar residues.

This sequence belongs to the methyltransferase superfamily. RsmH family.

The protein resides in the cytoplasm. It carries out the reaction cytidine(1402) in 16S rRNA + S-adenosyl-L-methionine = N(4)-methylcytidine(1402) in 16S rRNA + S-adenosyl-L-homocysteine + H(+). Its function is as follows. Specifically methylates the N4 position of cytidine in position 1402 (C1402) of 16S rRNA. In Xanthomonas campestris pv. campestris (strain B100), this protein is Ribosomal RNA small subunit methyltransferase H.